Consider the following 229-residue polypeptide: Small ribosomal subunit protein uS3 (229 aa).

Residues 39–109 enclose the KH type-2 domain; that stretch reads MRKYIKEQLM…QVNIDIVEIR (71 aa). The segment at 210-229 is disordered; sequence VVSQQNSRPSGPRGPRRPRA.

This sequence belongs to the universal ribosomal protein uS3 family. As to quaternary structure, part of the 30S ribosomal subunit. Forms a tight complex with proteins S10 and S14.

In terms of biological role, binds the lower part of the 30S subunit head. Binds mRNA in the 70S ribosome, positioning it for translation. This chain is Small ribosomal subunit protein uS3, found in Akkermansia muciniphila (strain ATCC BAA-835 / DSM 22959 / JCM 33894 / BCRC 81048 / CCUG 64013 / CIP 107961 / Muc).